Consider the following 366-residue polypeptide: ATP-dependent 6-phosphofructokinase 2 (366 aa).

Residues Gly-15, 78-79 (KD), and 119-122 (GDGT) contribute to the ATP site. Asp-120 contacts Mg(2+). Substrate-binding positions include 142 to 144 (TID), Arg-179, 186 to 188 (MGR), Glu-239, Arg-284, and 290 to 293 (HIQR). The active-site Proton acceptor is the Asp-144.

The protein belongs to the phosphofructokinase type A (PFKA) family. Mixed-substrate PFK group III subfamily. Homodimer or homotetramer. Mg(2+) is required as a cofactor.

It is found in the cytoplasm. It carries out the reaction beta-D-fructose 6-phosphate + ATP = beta-D-fructose 1,6-bisphosphate + ADP + H(+). It functions in the pathway carbohydrate degradation; glycolysis; D-glyceraldehyde 3-phosphate and glycerone phosphate from D-glucose: step 3/4. With respect to regulation, subject to allosteric activation by ADP and other diphosphonucleosides, and inhibition by phosphoenolpyruvate. In terms of biological role, catalyzes the phosphorylation of D-fructose 6-phosphate to fructose 1,6-bisphosphate by ATP, the first committing step of glycolysis. This Clostridium perfringens (strain 13 / Type A) protein is ATP-dependent 6-phosphofructokinase 2.